The chain runs to 1430 residues: ABC transporter eupT (1430 aa).

Residues 1–26 (MAPAIDSTVNDLQPNTPNPEKALSSQ) are disordered. The ABC transporter 1 domain maps to 112–368 (LALPAMIRQL…FVNLGFECPA (257 aa)). Asn-292 carries an N-linked (GlcNAc...) asparagine glycan. Helical transmembrane passes span 476 to 496 (WPAV…SSLF), 511 to 531 (VVLF…VMTL), 557 to 577 (VLVD…VFYF), 586 to 606 (GNFF…SGVF), and 620 to 640 (MVPA…VVPV). Asn-684 is a glycosylation site (N-linked (GlcNAc...) asparagine). Residues 707-727 (VGIIIAMVIFNYLMYFIASEY) form a helical membrane-spanning segment. In terms of domain architecture, ABC transporter 2 spans 789 to 1032 (FHWNNVCYDL…TLIDYFERNG (244 aa)). 825–832 (GVSGAGKT) contributes to the ATP binding site. A glycan (N-linked (GlcNAc...) asparagine) is linked at Asn-1019. The next 6 membrane-spanning stretches (helical) occupy residues 1133–1153 (ITLC…APLS), 1213–1233 (LPWS…PIGF), 1249–1269 (LMWL…HMCI), 1278–1298 (GGNI…VLAS), 1305–1325 (FWIF…VLST), and 1400–1420 (FGIL…LYWI).

This sequence belongs to the ABC transporter superfamily. ABCG family. PDR (TC 3.A.1.205) subfamily.

The protein resides in the cell membrane. Functionally, ABC transporter; part of the gene cluster that mediates the biosynthesis of eupenifeldin, a bistropolone meroterpenoid that acts as an antitumor agent. This chain is ABC transporter eupT, found in Phoma sp.